The following is a 274-amino-acid chain: NH(3)-dependent NAD(+) synthetase (274 aa).

46-53 (GISGGQDS) is an ATP binding site. Asp-52 contacts Mg(2+). Position 140 (Arg-140) interacts with deamido-NAD(+). An ATP-binding site is contributed by Thr-160. Glu-165 provides a ligand contact to Mg(2+). Deamido-NAD(+) is bound by residues Lys-173 and Asp-180. ATP is bound by residues Lys-189 and Thr-211. Residue 260 to 261 (HK) participates in deamido-NAD(+) binding.

This sequence belongs to the NAD synthetase family. Homodimer.

The catalysed reaction is deamido-NAD(+) + NH4(+) + ATP = AMP + diphosphate + NAD(+) + H(+). Its pathway is cofactor biosynthesis; NAD(+) biosynthesis; NAD(+) from deamido-NAD(+) (ammonia route): step 1/1. In terms of biological role, catalyzes the ATP-dependent amidation of deamido-NAD to form NAD. Uses ammonia as a nitrogen source. This chain is NH(3)-dependent NAD(+) synthetase, found in Streptococcus gordonii (strain Challis / ATCC 35105 / BCRC 15272 / CH1 / DL1 / V288).